Consider the following 166-residue polypeptide: MSQSNLIQTDRFVLSETERSSIEHEMHHYEDPRAASIEALKIVQKQRGWVPDGAIPAIGEVLGIPASDVEGVATFYSQIFRQPVGRHIIRVCDSMVCYIGGHESVVGEIQKQLGIGLGQTTADGRFTLLPVCCLGNCDKAPALMIDDDTHGDVRPDGVAKLLEAYV.

[2Fe-2S] cluster contacts are provided by Cys-92, Cys-97, Cys-133, and Cys-137.

Belongs to the complex I 24 kDa subunit family. As to quaternary structure, composed of 13 different subunits. Subunits NuoCD, E, F, and G constitute the peripheral sector of the complex. [2Fe-2S] cluster serves as cofactor.

The catalysed reaction is a quinone + NADH + 5 H(+)(in) = a quinol + NAD(+) + 4 H(+)(out). Its function is as follows. NDH-1 shuttles electrons from NADH, via FMN and iron-sulfur (Fe-S) centers, to quinones in the respiratory chain. The immediate electron acceptor for the enzyme in this species is believed to be ubiquinone. Couples the redox reaction to proton translocation (for every two electrons transferred, four hydrogen ions are translocated across the cytoplasmic membrane), and thus conserves the redox energy in a proton gradient. This Pseudomonas aeruginosa (strain ATCC 15692 / DSM 22644 / CIP 104116 / JCM 14847 / LMG 12228 / 1C / PRS 101 / PAO1) protein is NADH-quinone oxidoreductase subunit E (nuoE).